Consider the following 463-residue polypeptide: MENSLKSSGKPPAAPKVGMVSLGCPKALVDSEQIITQLRAEGYEISGTYDGADLVVVNTCGFIDEAVQESLDAIGEALAENGKVIVTGCLGAKKSASGSGLIEEVHPKVLAVTGPHAVGEVMQVVHSHLPKPHDPFVDLVPAAGIKLTPRHYAYLKISEGCNHRCSFCIIPSMRGDLVSRPVAEVMLEAENLFKAGVKELLVISQDTSAYGVDVKYRTGFWNGRPLKTRMTELVGALGELAAQYGAWVRLHYVYPYPHVDEIIPMMAQGPLKGHVLPYLDVPFQHAHPDVLKRMKRPANAEKVLERVQRWREICPDLTIRSTFIAGFPGETEAQFETLLDFIREAELDRVGCFAYSPVEGASANELDGALPDDVREARRARFMEVAEEVSAARIERKVGKTLKVLIDEVNEEGGIGRTAADAPEIDGVVYVEPAAKASKRYKVGDFVSVKITGADGHDLWGEV.

Positions 15-130 constitute an MTTase N-terminal domain; it reads PKVGMVSLGC…VMQVVHSHLP (116 aa). [4Fe-4S] cluster is bound by residues Cys-24, Cys-60, Cys-89, Cys-161, Cys-165, and Cys-168. One can recognise a Radical SAM core domain in the interval 147–392; that stretch reads LTPRHYAYLK…MEVAEEVSAA (246 aa). The region spanning 395–463 is the TRAM domain; sequence ERKVGKTLKV…ADGHDLWGEV (69 aa).

It belongs to the methylthiotransferase family. RimO subfamily. It depends on [4Fe-4S] cluster as a cofactor.

It localises to the cytoplasm. It carries out the reaction L-aspartate(89)-[ribosomal protein uS12]-hydrogen + (sulfur carrier)-SH + AH2 + 2 S-adenosyl-L-methionine = 3-methylsulfanyl-L-aspartate(89)-[ribosomal protein uS12]-hydrogen + (sulfur carrier)-H + 5'-deoxyadenosine + L-methionine + A + S-adenosyl-L-homocysteine + 2 H(+). Catalyzes the methylthiolation of an aspartic acid residue of ribosomal protein uS12. The protein is Ribosomal protein uS12 methylthiotransferase RimO of Burkholderia thailandensis (strain ATCC 700388 / DSM 13276 / CCUG 48851 / CIP 106301 / E264).